The sequence spans 426 residues: Glutamate-1-semialdehyde 2,1-aminomutase (426 aa).

Position 265 is an N6-(pyridoxal phosphate)lysine (Lys265).

Belongs to the class-III pyridoxal-phosphate-dependent aminotransferase family. HemL subfamily. Homodimer. Pyridoxal 5'-phosphate is required as a cofactor.

Its subcellular location is the cytoplasm. It carries out the reaction (S)-4-amino-5-oxopentanoate = 5-aminolevulinate. The protein operates within porphyrin-containing compound metabolism; protoporphyrin-IX biosynthesis; 5-aminolevulinate from L-glutamyl-tRNA(Glu): step 2/2. The protein is Glutamate-1-semialdehyde 2,1-aminomutase of Yersinia enterocolitica serotype O:8 / biotype 1B (strain NCTC 13174 / 8081).